A 954-amino-acid chain; its full sequence is DNA repair and telomere maintenance protein NBS1 (954 aa).

The 64-residue stretch at 22-85 (YLFGRTVAEA…KGTLVNGVQI (64 aa)) folds into the FHA domain. BRCT domains are found at residues 107 to 186 (TLKI…NAIV) and 244 to 349 (GYTF…LEAI). A compositionally biased stretch (polar residues) spans 368–377 (VSVSASVEPQ). Disordered regions lie at residues 368 to 431 (VSVS…FKGF), 444 to 506 (QAQS…PLPE), 528 to 580 (IEAG…KQED), 630 to 654 (VRQPEPHGPNRTREQDIADGRWDPR), and 692 to 954 (GIGD…GRRR). Over residues 378–393 (SSEKVRPAVEDRKEVE) the composition is skewed to basic and acidic residues. Over residues 416–428 (PHRRERRTGRSRF) the composition is skewed to basic residues. A compositionally biased stretch (polar residues) spans 458–471 (PSASQDSLFVSQRE). The segment covering 541–554 (PEPEREDEDVEMVE) has biased composition (acidic residues). Composition is skewed to basic and acidic residues over residues 640–654 (RTREQDIADGRWDPR) and 704–715 (GRVPRRPKETQT). Residues 726 to 737 (DGSGFAAAAASG) are compositionally biased toward low complexity. A compositionally biased stretch (basic and acidic residues) spans 738–751 (KGKEKDKENEKEVG). Composition is skewed to low complexity over residues 801 to 815 (EVVSSFPSVIPASEP) and 826 to 842 (RANALRSSAHSSQSQTQ). Acidic residues predominate over residues 936–945 (GSEEESEDDE).

Belongs to the Nibrin family. In terms of assembly, component of the MRN complex composed of two heterodimers RAD50 and MRE11 associated with a single NBS1.

It is found in the nucleus. The protein resides in the chromosome. In terms of biological role, component of the MRN complex, which plays a central role in double-strand break (DSB) repair, DNA recombination, maintenance of telomere integrity and meiosis. The MRN complex is involved in the repair of DNA double-strand breaks (DSBs) via homologous recombination (HR), an error-free mechanism which primarily occurs during S and G2 phases. The complex (1) mediates the end resection of damaged DNA, which generates proper single-stranded DNA, a key initial steps in HR, and is (2) required for the recruitment of other repair factors and efficient activation of ATM and ATR upon DNA damage. The MRN complex possesses single-strand endonuclease activity and double-strand-specific 3'-5' exonuclease activity, which are provided by MRE11, to initiate end resection, which is required for single-strand invasion and recombination. Within the MRN complex, NBS1 acts as a protein-protein adapter, which specifically recognizes and binds phosphorylated proteins, promoting their recruitment to DNA damage sites. Recruits MRE11 and RAD50 components of the MRN complex to DSBs in response to DNA damage. The protein is DNA repair and telomere maintenance protein NBS1 of Chaetomium thermophilum (strain DSM 1495 / CBS 144.50 / IMI 039719) (Thermochaetoides thermophila).